A 24-amino-acid polypeptide reads, in one-letter code: Positive regulator of RepFIC repA1 expression (24 aa).

This chain is Positive regulator of RepFIC repA1 expression (repL), found in Escherichia coli.